The following is a 388-amino-acid chain: Succinate--CoA ligase [ADP-forming] subunit beta (388 aa).

An ATP-grasp domain is found at Lys9–His244. Residues Lys46, Gly53–Gly55, Glu99, Thr102, and Glu107 contribute to the ATP site. Mg(2+) contacts are provided by Asn199 and Asp213. Substrate is bound by residues Asn264 and Gly321–Val323.

The protein belongs to the succinate/malate CoA ligase beta subunit family. Heterotetramer of two alpha and two beta subunits. Requires Mg(2+) as cofactor.

It carries out the reaction succinate + ATP + CoA = succinyl-CoA + ADP + phosphate. The enzyme catalyses GTP + succinate + CoA = succinyl-CoA + GDP + phosphate. It participates in carbohydrate metabolism; tricarboxylic acid cycle; succinate from succinyl-CoA (ligase route): step 1/1. Functionally, succinyl-CoA synthetase functions in the citric acid cycle (TCA), coupling the hydrolysis of succinyl-CoA to the synthesis of either ATP or GTP and thus represents the only step of substrate-level phosphorylation in the TCA. The beta subunit provides nucleotide specificity of the enzyme and binds the substrate succinate, while the binding sites for coenzyme A and phosphate are found in the alpha subunit. This is Succinate--CoA ligase [ADP-forming] subunit beta from Stutzerimonas stutzeri (strain A1501) (Pseudomonas stutzeri).